The sequence spans 384 residues: PqqA peptide cyclase (384 aa).

A Radical SAM core domain is found at 14-230 (IPAPVGLLAE…EAARERLKGQ (217 aa)). Residues C28, C32, and C35 each contribute to the [4Fe-4S] cluster site.

The protein belongs to the radical SAM superfamily. PqqE family. As to quaternary structure, interacts with PqqD. The interaction is necessary for activity of PqqE. Requires [4Fe-4S] cluster as cofactor.

It carries out the reaction [PQQ precursor protein] + S-adenosyl-L-methionine = E-Y cross-linked-[PQQ precursor protein] + 5'-deoxyadenosine + L-methionine + H(+). Its pathway is cofactor biosynthesis; pyrroloquinoline quinone biosynthesis. Catalyzes the cross-linking of a glutamate residue and a tyrosine residue in the PqqA protein as part of the biosynthesis of pyrroloquinoline quinone (PQQ). The sequence is that of PqqA peptide cyclase from Methylorubrum extorquens (strain CM4 / NCIMB 13688) (Methylobacterium extorquens).